An 865-amino-acid chain; its full sequence is MARALADLSVNLQVPRVVPSPDSDSDTDLEDPSPRRSAGGLHRSQVIHSGHFMVSSPHSDSLTRRRDQEGPVGLADFGPRSIDPTLTRLFECLSLAYSGKLVSPKWKNFKGLKLLCRDKIRLNNAIWRAWYIQYVQRRKSPVCGFVTPLQGSEADEHRKPEAVVLEGNYWKRRIEVVMREYHKWRIYYKKRLRKSSREGDFLAPKQVEGGWPPPERWCEQLFSSVVPVLLGGSEEEPGGRQLLDLDCFLSDISDTLFTMTQPSPSSLQLPSEDAYVGNADMIQPDLTPLQPSLDDFMEISDFFTNYRPPQTPTSSNFPEPPSFGPMADSLFSGGILGPEMPSPASASSSSGMTPLSGNTRLQARNSCSGPLDPSTFPSSEFLLPEDPKTKMPPAPVPTPLLPYPGPVKVHGLEPCTPSPFPTMAPPPALLSEEPLFSARFPFTTVPPAPGVSTLPAPTTFVPTPQPGPGPGPVPFPVDHLPHGYLEPVFGPHFTVPQGVQPRCKPCSPPPGGRKASPPTLTSATASPTATATARDNNPCLTQLLRAAKPEQVLEPSTVPSTLLRPPESPDAVPEIPRVRAFYPPIPAPTPPRPPPGPATLAPPRSLVVPKAERLSPPASSGSERRPSGDLNSIQPPGALSVHLSPPQTVLSRGRVDNNKMENRRITHISAEQKRRFNIKLGFDTLHGLVSTLSAQPSLKVSKATTLQKTAEYILMLQQERAAMQEEAQQLRDEIEELNAAINLCQQQLPATGVPITHQRFDQMRDMFDDYVRTRTLHNWKFWVFSILIRPLFESFNGMVSTASLHSLRQTSLAWLDQYCSLPALRPTVLNSLRQLSTSTSILTDPSLVPEQATRAVTEGPLGRPL.

2 disordered regions span residues 15–41 (PRVV…AGGL) and 53–77 (MVSS…LADF). Phosphoserine occurs at positions 20, 23, and 25. Thr-27 carries the phosphothreonine modification. At Ser-196 the chain carries Phosphoserine. Disordered stretches follow at residues 334 to 392 (GILG…TKMP) and 500 to 653 (QPRC…LSRG). Residues 351–368 (GMTPLSGNTRLQARNSCS) are compositionally biased toward polar residues. The span at 515–533 (ASPPTLTSATASPTATATA) shows a compositional bias: low complexity. Residue Ser-568 is modified to Phosphoserine; by AMPK. The segment covering 583 to 597 (PPIPAPTPPRPPPGP) has biased composition (pro residues). 3 positions are modified to phosphoserine: Ser-615, Ser-627, and Ser-644. The bHLH domain maps to 662 to 716 (NRRITHISAEQKRRFNIKLGFDTLHGLVSTLSAQPSLKVSKATTLQKTAEYILML). The interval 716–737 (LQQERAAMQEEAQQLRDEIEEL) is leucine-zipper.

As to quaternary structure, binds DNA as a heterodimer with TCFL4/MLX. Phosphorylation at Ser-568 by AMPK inactivates the DNA-binding activity.

It localises to the nucleus. Functionally, transcriptional repressor. Binds to the canonical and non-canonical E box sequences 5'-CACGTG-3'. This chain is Carbohydrate-responsive element-binding protein (Mlxipl), found in Rattus norvegicus (Rat).